A 459-amino-acid polypeptide reads, in one-letter code: UDP-N-acetylmuramoyl-tripeptide--D-alanyl-D-alanine ligase (459 aa).

An ATP-binding site is contributed by glycine 121–threonine 127.

Belongs to the MurCDEF family. MurF subfamily.

It localises to the cytoplasm. It catalyses the reaction D-alanyl-D-alanine + UDP-N-acetyl-alpha-D-muramoyl-L-alanyl-gamma-D-glutamyl-meso-2,6-diaminopimelate + ATP = UDP-N-acetyl-alpha-D-muramoyl-L-alanyl-gamma-D-glutamyl-meso-2,6-diaminopimeloyl-D-alanyl-D-alanine + ADP + phosphate + H(+). Its pathway is cell wall biogenesis; peptidoglycan biosynthesis. Functionally, involved in cell wall formation. Catalyzes the final step in the synthesis of UDP-N-acetylmuramoyl-pentapeptide, the precursor of murein. This Treponema pallidum (strain Nichols) protein is UDP-N-acetylmuramoyl-tripeptide--D-alanyl-D-alanine ligase.